We begin with the raw amino-acid sequence, 324 residues long: Beta-ketoacyl-[acyl-carrier-protein] synthase III (324 aa).

Catalysis depends on residues C112 and H251. The ACP-binding stretch occupies residues 252–256; it reads QANLR. The active site involves N281.

Belongs to the thiolase-like superfamily. FabH family. As to quaternary structure, homodimer.

The protein localises to the cytoplasm. It catalyses the reaction malonyl-[ACP] + acetyl-CoA + H(+) = 3-oxobutanoyl-[ACP] + CO2 + CoA. The protein operates within lipid metabolism; fatty acid biosynthesis. Functionally, catalyzes the condensation reaction of fatty acid synthesis by the addition to an acyl acceptor of two carbons from malonyl-ACP. Catalyzes the first condensation reaction which initiates fatty acid synthesis and may therefore play a role in governing the total rate of fatty acid production. Possesses both acetoacetyl-ACP synthase and acetyl transacylase activities. Its substrate specificity determines the biosynthesis of branched-chain and/or straight-chain of fatty acids. In Clostridium perfringens (strain ATCC 13124 / DSM 756 / JCM 1290 / NCIMB 6125 / NCTC 8237 / Type A), this protein is Beta-ketoacyl-[acyl-carrier-protein] synthase III.